Reading from the N-terminus, the 446-residue chain is DDB1- and CUL4-associated factor 12-A (446 aa).

Positions 1 to 12 are enriched in basic residues; it reads MTRRSVSRKRRA. The disordered stretch occupies residues 1–32; sequence MTRRSVSRKRRANPGSGPGEQSDWDHSAHKRK. 4 WD repeats span residues 132–173, 177–215, 245–284, and 333–370; these read SHQS…PVCV, GHND…VNKS, PVNC…SKLL, and EQGS…FLED.

It belongs to the WD repeat DCAF12 family. As to quaternary structure, component of the DCX(DCAF12) E3 ubiquitin ligase complex, at least composed of cul4 (cul4a or cul4b), ddb1, dcaf12 and rbx1.

Its subcellular location is the cytoplasm. It is found in the cytoskeleton. It localises to the microtubule organizing center. The protein localises to the centrosome. The protein resides in the nucleus. It functions in the pathway protein modification; protein ubiquitination. Substrate-recognition component of a DCX (DDB1-CUL4-X-box) E3 ubiquitin-protein ligase complex of the DesCEND (destruction via C-end degrons) pathway, which recognizes a C-degron located at the extreme C terminus of target proteins, leading to their ubiquitination and degradation. The C-degron recognized by the DesCEND pathway is usually a motif of less than ten residues and can be present in full-length proteins, truncated proteins or proteolytically cleaved forms. The DCX(DCAF12) complex specifically recognizes proteins with a diglutamate (Glu-Glu) at the C-terminus leading to their ubiquitination and degradation. Also directly recognizes the C-terminal glutamate-leucine (Glu-Leu) degron as an alternative degron in proteins leading to their ubiquitination and degradation. The sequence is that of DDB1- and CUL4-associated factor 12-A (dcaf12-a) from Xenopus laevis (African clawed frog).